The following is an 870-amino-acid chain: NEDD4-like E3 ubiquitin-protein ligase WWP2 (870 aa).

Residues 1-117 enclose the C2 domain; sequence MASASSSRAG…KNNGGKMENM (117 aa). The interval 151–299 is disordered; sequence VPNGSALTDG…QQLPAAAQAP (149 aa). Composition is skewed to polar residues over residues 152 to 171 and 200 to 210; these read PNGS…SSGT and SARTTPATGEQ. Position 211 is a phosphoserine (Ser-211). Polar residues-rich tracts occupy residues 222–243 and 263–272; these read VKNS…TTAT and VTPNPNTTSL. A compositionally biased stretch (low complexity) spans 290 to 299; the sequence is QQLPAAAQAP. 4 WW domains span residues 300–333, 330–363, 405–437, and 444–477; these read DALP…RPLP, RPLP…RPTA, GPLP…DPRT, and PALP…DPRP. An HECT domain is found at 536-870; it reads KPYDLRRRLY…IEETEGFGQE (335 aa). Cys-838 acts as the Glycyl thioester intermediate in catalysis.

In terms of assembly, interacts with POU5F1, RBP1, EGR2 and SLC11A2. Interacts with SCNN1A, SCNN1B, SCNN1G, WBP1, WBP2 and ATN1. Interacts with ERBB4, NDFIP1 and NDFIP2. Interacts with ARRDC4. Interacts (via WW domains) with ARRDC1 (via PPxY motifs); ubiquitinates ARRDC1. Interacts (via WW domains) with ARRDC2 and ARRDC3. As to quaternary structure, (Microbial infection) Interacts with adenovirus type 2 PIII. Post-translationally, autoubiquitinated. Ubiquitinated by the SCF(FBXL15) complex, leading to its degradation by the proteasome. In terms of tissue distribution, detected in heart, throughout the brain, placenta, lung, liver, muscle, kidney and pancreas. Also detected in spleen and peripheral blood leukocytes.

It localises to the nucleus. It carries out the reaction S-ubiquitinyl-[E2 ubiquitin-conjugating enzyme]-L-cysteine + [acceptor protein]-L-lysine = [E2 ubiquitin-conjugating enzyme]-L-cysteine + N(6)-ubiquitinyl-[acceptor protein]-L-lysine.. It functions in the pathway protein modification; protein ubiquitination. Its activity is regulated as follows. Activated by NDFIP1- and NDFIP2-binding. Functionally, E3 ubiquitin-protein ligase which accepts ubiquitin from an E2 ubiquitin-conjugating enzyme in the form of a thioester and then directly transfers the ubiquitin to targeted substrates. Polyubiquitinates POU5F1 by 'Lys-63'-linked conjugation and promotes it to proteasomal degradation; in embryonic stem cells (ESCs) the ubiquitination is proposed to regulate POU5F1 protein level. Ubiquitinates EGR2 and promotes it to proteasomal degradation; in T-cells the ubiquitination inhibits activation-induced cell death. Ubiquitinates SLC11A2; the ubiquitination is enhanced by presence of NDFIP1 and NDFIP2. Ubiquitinates RPB1 and promotes it to proteasomal degradation. This Homo sapiens (Human) protein is NEDD4-like E3 ubiquitin-protein ligase WWP2 (WWP2).